The following is a 182-amino-acid chain: Large ribosomal subunit protein bL17m (182 aa).

It belongs to the bacterial ribosomal protein bL17 family.

It is found in the mitochondrion. The sequence is that of Large ribosomal subunit protein bL17m (mrpl17) from Dictyostelium discoideum (Social amoeba).